A 796-amino-acid polypeptide reads, in one-letter code: Protocadherin beta-3 (796 aa).

A signal peptide spans M1–A26. Residues G27–L690 lie on the Extracellular side of the membrane. Cadherin domains follow at residues V35 to F133, M138 to F242, Y247 to L347, V352 to F451, and Y456 to V561. N-linked (GlcNAc...) asparagine glycosylation is present at N169. N418 and N436 each carry an N-linked (GlcNAc...) asparagine glycan. An N-linked (GlcNAc...) asparagine glycan is attached at N567. Residues G568–L671 enclose the Cadherin 6 domain. Residues V691–V711 traverse the membrane as a helical segment. Residues R712–S796 lie on the Cytoplasmic side of the membrane.

It is found in the cell membrane. Potential calcium-dependent cell-adhesion protein. May be involved in the establishment and maintenance of specific neuronal connections in the brain. This is Protocadherin beta-3 (PCDHB3) from Homo sapiens (Human).